The following is a 92-amino-acid chain: N(2)-fixation sustaining protein CowN (92 aa).

This sequence belongs to the CowN family.

Its function is as follows. Is required to sustain N(2)-dependent growth in the presence of low levels of carbon monoxide (CO). Probably acts by protecting the N(2) fixation ability of the nitrogenase complex, which is inactivated in the presence of CO. This is N(2)-fixation sustaining protein CowN from Rhodopseudomonas palustris (strain BisB18).